Here is a 1288-residue protein sequence, read N- to C-terminus: MPNLQQTASQSQHHLHPHHLRPQQQQQQHHHHHQQQQQQQHTHHQQQQQHHSDFPLPDGWDIAKDFDGKTYYIDHINKKTTWLDPRDCYTKPQTFEDCVGDELPMGWEESYDPNIGPYYINHLAQSTQLEDPRQEWKTVQEQMLSDYLSAAQDQLENKREMFDVKQQRLLWAQEEYNHLKLAASRSSLCSSSSSMSRHDPELLRADLMLARERVHQLKQELTHITNDISYTERGMNTLYSVGEKINARENGCYDIAEVHAIREEMLKVHKSLVSGEKVREELMRSLVQIKNELGRQQISEENSDLASPFDRVCVASQTDLCGSSGENLNGGARFAEMAKTKWQYAEWRKHIKKLQQQLADHVERIEPGQLESDKDRILLIQEKEKLLNDLNSISLKSRSEEEKRVIHQTRHKLEEDLKEAYEANNTCVANRLRFHEEKQLLLDKLQEALKSTKLLEERLKSFSSESTFSISSGSSLGSLSTASSKSALSFTDIYIDPFAVDSPIDVVDLRRRSQRLFQQHQQQRLHPVHPVLQQQQSAEVTLSPRSSLSMETPPASPMKYNAGADQTPQALKEEPTYANALPAPPAYTAPPPVPISGVRARPYDLDSTVLDCMMLEAKLQKLNMGTPLNLAVAPLSPISEKPSLLDLPQEMLSRSSSTSNTRSVSAAVSNESVAGDSGVFEASRAHLPRKELAQVQIGLKYLKQEGVLVVSLERANNLLALWTASADNSQVYLRAALLPNSLTSIRTKALGDFQKPVFNDTFAVPITLDKLLTKSLQVTVVTMTGQKEEIIGTVQISMAEFNPEDSTLKWYNVLSSKFIPSFESLDIPSTSAAAAAAAVAASNAPNPGNNREESSDESTITSSQTSTLTRNQAPCMELQEQMAAELLGLGPLNEPECSDDDDDDEEEELDDKQLVSDVGLMNSSSMLHAYLQNMKQEFADKETNTDRAYLPEKSRGQSQLMDDRPVKRSQTFTPSEAFSKNRYNCRLNRSDSDSAMHCGVAPHTFQRGAAERRSLRFHSKAPKSVTKLHHTHIPRTSLDLELDLQAQHSKLYFLNDQIAKLQNLKEVLQKACENKDPLVAAWAIENEEFQRLVARADPAKCPEERQLQKLLMKTAKEIHKLRKTKVPKGCPDLVSFKEKITFFTRKGLSVPELPSEFTLPEANPIEEEEEEEDENEFYNSAETAIAINTALVASSNRNKNLSEHPHRATSGAVPKIPAPVVTPAATPAATPAATPAATSAATPAATPVVSPAAQPDAKPADAPIPVASNDAEQQRFDYVVDRNYGVEV.

Residues 1–11 (MPNLQQTASQS) are compositionally biased toward polar residues. The tract at residues 1–60 (MPNLQQTASQSQHHLHPHHLRPQQQQQQHHHHHQQQQQQQHTHHQQQQQHHSDFPLPDGW) is disordered. Positions 35-49 (QQQQQQHTHHQQQQQ) are enriched in low complexity. 2 consecutive WW domains span residues 54–87 (FPLP…DPRD) and 101–134 (DELP…DPRQ). Coiled coils occupy residues 201-229 (ELLR…NDIS) and 335-463 (AEMA…KSFS). The span at 541-550 (TLSPRSSLSM) shows a compositional bias: polar residues. The disordered stretch occupies residues 541–560 (TLSPRSSLSMETPPASPMKY). Positions 691–811 (ELAQVQIGLK…NPEDSTLKWY (121 aa)) constitute a C2 domain. 3 disordered regions span residues 841-869 (ASNA…STLT), 890-912 (GPLN…LDDK), and 942-975 (ETNT…FTPS). Over residues 857–869 (ESTITSSQTSTLT) the composition is skewed to low complexity. A compositionally biased stretch (acidic residues) spans 896–910 (ECSDDDDDDEEEELD). The span at 942-966 (ETNTDRAYLPEKSRGQSQLMDDRPV) shows a compositional bias: basic and acidic residues. Ser992 bears the Phosphoserine mark. Residues 1049–1076 (SKLYFLNDQIAKLQNLKEVLQKACENKD) are a coiled coil. Positions 1224–1267 (AATPAATPAATPAATSAATPAATPVVSPAAQPDAKPADAPIPVA) are enriched in low complexity. Positions 1224–1269 (AATPAATPAATPAATSAATPAATPVVSPAAQPDAKPADAPIPVASN) are disordered.

It belongs to the WWC family. KIBRA subfamily. Forms a complex with Mer and Ex. Interacts (via domain WW 1) with Ex (via RXPPXY motif). Interacts with Mer, Sav, Hpo and Wts. In terms of tissue distribution, expressed in ovarian posterior follicle cells and wing disks (at protein level).

It is found in the cytoplasm. The protein localises to the apical cell membrane. Regulator of the Hippo/SWH (Sav/Wts/Hpo) signaling pathway, a signaling pathway that plays a pivotal role in organ size control and tumor suppression by restricting proliferation and promoting apoptosis. The core of this pathway is composed of a kinase cascade wherein Hippo (Hpo), in complex with its regulatory protein Salvador (Sav), phosphorylates and activates Warts (Wts) in complex with its regulatory protein Mats, which in turn phosphorylates and inactivates the Yorkie (Yki) oncoprotein. Kibra acts synergistically along with Ex and Mer to regulate the Hippo signaling pathway. This is Protein kibra (kibra) from Drosophila melanogaster (Fruit fly).